A 101-amino-acid polypeptide reads, in one-letter code: uncharacterized protein (101 aa).

The helical transmembrane segment at 58–80 threads the bilayer; that stretch reads VFPSLNIIILMSDALMFFLRSSI.

Its subcellular location is the membrane. This is an uncharacterized protein from Saccharomyces cerevisiae (strain ATCC 204508 / S288c) (Baker's yeast).